The sequence spans 448 residues: Exodeoxyribonuclease 7 large subunit (448 aa).

This sequence belongs to the XseA family. Heterooligomer composed of large and small subunits.

It localises to the cytoplasm. It catalyses the reaction Exonucleolytic cleavage in either 5'- to 3'- or 3'- to 5'-direction to yield nucleoside 5'-phosphates.. Its function is as follows. Bidirectionally degrades single-stranded DNA into large acid-insoluble oligonucleotides, which are then degraded further into small acid-soluble oligonucleotides. This Geobacillus kaustophilus (strain HTA426) protein is Exodeoxyribonuclease 7 large subunit.